Consider the following 138-residue polypeptide: Putative pre-16S rRNA nuclease (138 aa).

Belongs to the YqgF nuclease family.

It is found in the cytoplasm. Could be a nuclease involved in processing of the 5'-end of pre-16S rRNA. This is Putative pre-16S rRNA nuclease from Citrobacter koseri (strain ATCC BAA-895 / CDC 4225-83 / SGSC4696).